A 101-amino-acid polypeptide reads, in one-letter code: Large ribosomal subunit protein bL21 (101 aa).

Belongs to the bacterial ribosomal protein bL21 family. Part of the 50S ribosomal subunit. Contacts protein L20.

Functionally, this protein binds to 23S rRNA in the presence of protein L20. In Micrococcus luteus (strain ATCC 4698 / DSM 20030 / JCM 1464 / CCM 169 / CCUG 5858 / IAM 1056 / NBRC 3333 / NCIMB 9278 / NCTC 2665 / VKM Ac-2230) (Micrococcus lysodeikticus), this protein is Large ribosomal subunit protein bL21.